Reading from the N-terminus, the 531-residue chain is Dihydropyrimidinase (531 aa).

Zn(2+) is bound by residues His-103, His-105, and Lys-193. Residue Lys-193 is modified to N6-carboxylysine. Residue Tyr-198 participates in substrate binding. Positions 226 and 282 each coordinate Zn(2+). A substrate-binding site is contributed by Ser-332. Asp-359 serves as a coordination point for Zn(2+). Asn-380 is a binding site for substrate.

The protein belongs to the metallo-dependent hydrolases superfamily. Hydantoinase/dihydropyrimidinase family. Homotetramer. Requires Zn(2+) as cofactor. Carboxylation allows a single lysine to coordinate two zinc ions.

The protein localises to the endoplasmic reticulum. It carries out the reaction 5,6-dihydrouracil + H2O = 3-(carbamoylamino)propanoate + H(+). Its pathway is amino-acid biosynthesis; beta-alanine biosynthesis. Catalyzes the second step of the reductive pyrimidine degradation, the reversible hydrolytic ring opening of dihydropyrimidines. Can catalyze the ring opening of 5,6-dihydrouracil to N-carbamoyl-alanine and of 5,6-dihydrothymine to N-carbamoyl-amino isobutyrate. Involved in the recycling of nitrogen from nucleobases to general nitrogen metabolism. The protein is Dihydropyrimidinase of Arabidopsis thaliana (Mouse-ear cress).